The sequence spans 875 residues: Serine/threonine-protein kinase D2 (875 aa).

Low complexity predominate over residues 1–12 (MAAAPSHPAGLP). Residues 1 to 35 (MAAAPSHPAGLPGSPGPGSPPPPGGLDLQSPPPLL) form a disordered region. Positions 14–35 (SPGPGSPPPPGGLDLQSPPPLL) are enriched in pro residues. At S30 the chain carries Phosphoserine. Y87 is modified (phosphotyrosine). A Phorbol-ester/DAG-type 1 zinc finger spans residues 138-188 (PHALTVHSYRAPAFCDHCGEMLFGLVRQGLKCDGCGLNYHKRCAFSIPNNC). Phosphoserine occurs at positions 197, 198, 200, 203, 206, 211, 212, and 214. Residues 224–247 (RSTTDLLPRRPPSSSSSSSSSSFY) form a disordered region. The segment covering 236–245 (SSSSSSSSSS) has biased composition (low complexity). S244 bears the Phosphoserine; by CSNK1D and CSNK1E mark. Residue S245 is modified to Phosphoserine. The segment at 265-315 (PHTFLIHSYTRPTVCQACKKLLKGLFRQGLQCKDCKFNCHKRCATRVPNDC) adopts a Phorbol-ester/DAG-type 2 zinc-finger fold. Positions 332 to 374 (DYSEADKSSISDELEDSGVIPGSHSESALHASEEEEGEGHKAQ) are disordered. Residues 398-510 (TTLREGWVVH…WETAIRQALM (113 aa)) form the PH domain. Residue Y408 is modified to Phosphotyrosine. Y439 carries the phosphotyrosine; by ABL1 modification. S519 bears the Phosphoserine mark. The Protein kinase domain maps to 552 to 808 (IFPDEVLGSG…VDKSLSHPWL (257 aa)). Residues 558–566 (LGSGQFGVV) and K581 contribute to the ATP site. D675 (proton acceptor) is an active-site residue. S707 carries the post-translational modification Phosphoserine; by PKC. S711 bears the Phosphoserine; by autocatalysis mark. Y718 is modified (phosphotyrosine; by ABL1). The Important for ABL1-mediated Tyr-718 phosphorylation signature appears at 725 to 727 (LNQ). A Phosphoserine; by autocatalysis modification is found at S873.

Belongs to the protein kinase superfamily. CAMK Ser/Thr protein kinase family. PKD subfamily. In terms of assembly, interacts (via C-terminus) with LCK. Interacts (via N-terminus and zing-finger domain 1 and 2) with PRKCD in response to oxidative stress; the interaction is independent of PRKD2 tyrosine phosphorylation. It depends on Mg(2+) as a cofactor. In terms of processing, phosphorylation of Ser-873 correlates with the activation status of the kinase. Ser-707 is probably phosphorylated by PKC. Phosphorylation at Ser-244 by CSNK1D and CSNK1E promotes nuclear localization and substrate targeting. Phosphorylation at Ser-244, Ser-707 and Ser-711 is required for nuclear localization. Phosphorylated at Tyr-438 by ABL1 in response to oxidative stress. Phosphorylated at Tyr-718 by ABL1 specifically in response to oxidative stress; requires prior phosphorylation at Ser-707 or/and Ser-711.

It localises to the cytoplasm. Its subcellular location is the cell membrane. The protein localises to the golgi apparatus. The protein resides in the trans-Golgi network. The catalysed reaction is L-seryl-[protein] + ATP = O-phospho-L-seryl-[protein] + ADP + H(+). It catalyses the reaction L-threonyl-[protein] + ATP = O-phospho-L-threonyl-[protein] + ADP + H(+). Activated by DAG and phorbol esters. Phorbol-ester/DAG-type domains bind DAG, mediating translocation to membranes. Autophosphorylation of Ser-711 and phosphorylation of Ser-707 by PKC relieves auto-inhibition by the PH domain. Catalytic activity is further increased by phosphorylation at Tyr-718 in response to oxidative stress. Serine/threonine-protein kinase that converts transient diacylglycerol (DAG) signals into prolonged physiological effects downstream of PKC, and is involved in the regulation of cell proliferation via MAPK1/3 (ERK1/2) signaling, oxidative stress-induced NF-kappa-B activation, inhibition of HDAC7 transcriptional repression, signaling downstream of T-cell antigen receptor (TCR) and cytokine production, and plays a role in Golgi membrane trafficking, angiogenesis, secretory granule release and cell adhesion. May potentiate mitogenesis induced by the neuropeptide bombesin by mediating an increase in the duration of MAPK1/3 (ERK1/2) signaling, which leads to accumulation of immediate-early gene products including FOS that stimulate cell cycle progression. In response to oxidative stress, is phosphorylated at Tyr-438 and Tyr-718 by ABL1, which leads to the activation of PRKD2 without increasing its catalytic activity, and mediates activation of NF-kappa-B. In response to the activation of the gastrin receptor CCKBR, is phosphorylated at Ser-244 by CSNK1D and CSNK1E, translocates to the nucleus, phosphorylates HDAC7, leading to nuclear export of HDAC7 and inhibition of HDAC7 transcriptional repression of NR4A1/NUR77. Upon TCR stimulation, is activated independently of ZAP70, translocates from the cytoplasm to the nucleus and is required for interleukin-2 (IL2) promoter up-regulation. During adaptive immune responses, is required in peripheral T-lymphocytes for the production of the effector cytokines IL2 and IFNG after TCR engagement and for optimal induction of antibody responses to antigens. In epithelial cells stimulated with lysophosphatidic acid (LPA), is activated through a PKC-dependent pathway and mediates LPA-stimulated interleukin-8 (IL8) secretion via a NF-kappa-B-dependent pathway. During TCR-induced T-cell activation, interacts with and is activated by the tyrosine kinase LCK, which results in the activation of the NFAT transcription factors. In the trans-Golgi network (TGN), regulates the fission of transport vesicles that are on their way to the plasma membrane and in polarized cells is involved in the transport of proteins from the TGN to the basolateral membrane. Plays an important role in endothelial cell proliferation and migration prior to angiogenesis, partly through modulation of the expression of KDR/VEGFR2 and FGFR1, two key growth factor receptors involved in angiogenesis. In secretory pathway, is required for the release of chromogranin-A (CHGA)-containing secretory granules from the TGN. Downstream of PRKCA, plays important roles in angiotensin-2-induced monocyte adhesion to endothelial cells. The chain is Serine/threonine-protein kinase D2 (Prkd2) from Mus musculus (Mouse).